Consider the following 152-residue polypeptide: UPF0225 protein YchJ (152 aa).

The protein belongs to the UPF0225 family.

The chain is UPF0225 protein YchJ from Escherichia coli O81 (strain ED1a).